Reading from the N-terminus, the 571-residue chain is Zinc metalloproteinase-disintegrin-like jararhagin (571 aa).

Positions 1-150 (ATRPKGAVQP…KKASQLAFTA (150 aa)) are excised as a propeptide. A Pyrrolidone carboxylic acid (Glu) modification is found at glutamate 151. Positions 159 to 355 (KYIEFFVVVD…HNPECIINEP (197 aa)) constitute a Peptidase M12B domain. Ca(2+)-binding residues include glutamate 162 and aspartate 246. Cystine bridges form between cysteine 270-cysteine 350, cysteine 310-cysteine 334, and cysteine 312-cysteine 317. Residue histidine 295 participates in Zn(2+) binding. Glutamate 296 is an active-site residue. The Zn(2+) site is built by histidine 299 and histidine 305. The N-linked (GlcNAc...) asparagine glycan is linked to asparagine 333. Residues cysteine 350, asparagine 353, valine 365, asparagine 368, leucine 370, glutamate 372, glutamate 375, and aspartate 378 each contribute to the Ca(2+) site. Residues 363 to 449 (PPVCGNELLE…ECPADVFHKN (87 aa)) enclose the Disintegrin domain. Cystine bridges form between cysteine 366–cysteine 385, cysteine 366–cysteine 395, cysteine 377–cysteine 390, cysteine 377–cysteine 395, cysteine 379–cysteine 385, cysteine 389–cysteine 412, cysteine 403–cysteine 409, cysteine 408–cysteine 434, cysteine 421–cysteine 441, cysteine 428–cysteine 453, cysteine 428–cysteine 460, cysteine 453–cysteine 465, cysteine 460–cysteine 465, cysteine 472–cysteine 487, cysteine 472–cysteine 522, cysteine 487–cysteine 533, cysteine 500–cysteine 510, cysteine 510–cysteine 517, cysteine 517–cysteine 559, cysteine 522–cysteine 533, cysteine 553–cysteine 564, and cysteine 559–cysteine 564. Residues 427 to 429 (ECD) carry the D/ECD-tripeptide motif. Positions 429, 430, 432, 444, and 445 each coordinate Ca(2+).

Belongs to the venom metalloproteinase (M12B) family. P-III subfamily. P-IIIb sub-subfamily. As to quaternary structure, monomer (Jararhagin and Jararhagin-C) and dimer (Jaracetin). It depends on Zn(2+) as a cofactor. Post-translationally, the N-terminus of Jararhagin is blocked. In terms of tissue distribution, expressed by the venom gland.

Its subcellular location is the secreted. The catalysed reaction is Cleavage of 10-His-|-Leu-11, 14-Ala-|-Leu-15, 16-Tyr-|-Leu-17 and 24-Phe-|-Phe-25 bonds in insulin B chain.. Inhibited by EDTA, 1,10 phenanthroline and batimastat (a peptidomimetic MMP inhibitor). In terms of biological role, snake venom zinc metalloproteinase-disintegrin-like jararhagin: causes hemorrhage. This is the result of the degradation of sub-endothelial matrix proteins leading to the disruption of the blood vessel endothelium, with accompanying disturbances in platelet function. It is able to degrade von Willebrand factor (vWF) and it hydrolyzes the alpha-chain of fibrinogen (FGA) while leaving the beta and gamma chains unaffected. It inhibits collagen-induced platelet aggregation through the binding to alpha-2/beta-1 integrin (ITGA2/ITGB1) (collagen receptor), and it cleaves the beta-1 subunit of the same integrin, inhibiting platelet interaction and ultimately causing impairment of signal transduction. It has inability to be affected by the plasma inhibitor alpha(2)-macroglobulin. In fibroblasts, it functions as a collagen-mimetic substrate and, in endothelial cells, it causes apoptosis and indirectly inhibits cell proliferation by release of angiostatin-like compounds. It induces a strong pro-inflammatory response characterized by intense leukocyte accumulation and release of cytokines at the site of the injection. Although hemorrhage and edema are a response to the direct effect of this toxin, jararhagin-induced inflammation and necrosis are dependent on macrophages and key pro-inflammatory cytokines or their receptors. It also possesses anti-tumorgenic properties. Its function is as follows. The monomeric form inhibits collagen- and ADP-induced platelet aggregation, but has no effect on glycoprotein Ib-IX-dependent (GP1BA/GP5/GP9) platelet agglutination. Locally activates the early events of an acute inflammatory response as leukocyte rolling and pro-inflammatory cytokine release. The dimeric form jaracetin may be a dimeric form of jararhagin-C. It binds to von Willebrand factor (VWF) and induces its interaction with GPIbalpha (GP1BA) (via the vWF A1 domain), resulting in platelet aggregation. Also binds the alpha-2 subunit of the alpha-2/beta-1 (ITGA2/ITGB1) integrin. It potently induces platelet aggregation in citrated platelet-rich plasma. The polypeptide is Zinc metalloproteinase-disintegrin-like jararhagin (Bothrops jararaca (Jararaca)).